Consider the following 437-residue polypeptide: MANVVVIGAQWGDEGKGKITDLLSRSADVVVRYQGGVNAGHTIVVDGQVLKLHLIPSGILYPDTTCLIGSGTVVDPKVLLGELAMLASNDIDASGLKVASTAHVTLPYHRLLDQAMEQQRGNQRIGTTGRGIGPTYSDKAERSGLRMIDLLDEQLLRERLQGPIAAKNLQLQKLYGLEPLDAEEVIAEYADYGRRLSSHVVDCTRAIHDAARARKNILFEGAQGTLLDLDHGTYPYVTSSNPVAGGACIGAGVGPTLIDRVIGVAKAYTTRVGEGPFPTELEGSLSDHLCDRGGEYGTTTGRRRRCGWFDGVIGRYAVEVNGLDCLAITKLDVLDELDEIQVCVAYELDGQRVNHFPSSASEFARCQPVFETLPGWQTSTADCRSLDDLPEKAMSYLRFLADLMEVPIAIVSLGASRDQTIVVEDPIHGPKRALLSA.

GTP contacts are provided by residues 12 to 18 (GDEGKGK) and 40 to 42 (GHT). Residue Asp13 is the Proton acceptor of the active site. Mg(2+) is bound by residues Asp13 and Gly40. IMP-binding positions include 13 to 16 (DEGK), 38 to 41 (NAGH), Thr128, Arg142, Gln223, Thr238, and Arg302. The active-site Proton donor is the His41. Substrate is bound at residue 298-304 (TTTGRRR). Residues Arg304, 330 to 332 (KLD), and 412 to 414 (SLG) each bind GTP.

Belongs to the adenylosuccinate synthetase family. Homodimer. Requires Mg(2+) as cofactor.

Its subcellular location is the cytoplasm. It carries out the reaction IMP + L-aspartate + GTP = N(6)-(1,2-dicarboxyethyl)-AMP + GDP + phosphate + 2 H(+). It functions in the pathway purine metabolism; AMP biosynthesis via de novo pathway; AMP from IMP: step 1/2. Functionally, plays an important role in the de novo pathway of purine nucleotide biosynthesis. Catalyzes the first committed step in the biosynthesis of AMP from IMP. The protein is Adenylosuccinate synthetase of Synechococcus sp. (strain RCC307).